A 319-amino-acid polypeptide reads, in one-letter code: MGLVRSFALVIVFLSCLIAVYGQGTRIGFYSTTCPNAETIVRTTVASHFGSDPKVAPGLLRMHNHDCFVQGCDGSVLLSGPNSERTAGANVNLHGFEVIDDAKRQLEAACPGVVSCADILALAARDSVSLTNGQSWQVPTGRRDGRVSLASNVNNLPSPSDSLAIQQRKFSAFRLNTRDLVTLVGGGHTIGTAACGFITNRIFNSSGNTADPTMDQTFVPQLQRLCPQNGDGSARVDLDTGSGNTFDTSYFINLSRNRGILQSDHVLWTSPATRSIVQEFMAPRGNFNVQFARSMVKMSNIGVKTGTNGEIRRVCSAVN.

An N-terminal signal peptide occupies residues 1-22 (MGLVRSFALVIVFLSCLIAVYG). 4 disulfide bridges follow: Cys-34–Cys-110, Cys-67–Cys-72, Cys-116–Cys-315, and Cys-195–Cys-226. The Proton acceptor role is filled by His-65. Ca(2+) is bound by residues Asp-66, Val-69, Gly-71, Asp-73, and Ser-75. Pro-157 contacts substrate. His-188 serves as a coordination point for heme b. Thr-189 contributes to the Ca(2+) binding site. A glycan (N-linked (GlcNAc...) asparagine) is linked at Asn-204. The Ca(2+) site is built by Asp-239, Ser-242, and Asp-247. Asn-253 is a glycosylation site (N-linked (GlcNAc...) asparagine).

The protein belongs to the peroxidase family. Classical plant (class III) peroxidase subfamily. Requires heme b as cofactor. The cofactor is Ca(2+). In terms of tissue distribution, mainly expressed in roots.

The protein localises to the secreted. The enzyme catalyses 2 a phenolic donor + H2O2 = 2 a phenolic radical donor + 2 H2O. Its function is as follows. Removal of H(2)O(2), oxidation of toxic reductants, biosynthesis and degradation of lignin, suberization, auxin catabolism, response to environmental stresses such as wounding, pathogen attack and oxidative stress. These functions might be dependent on each isozyme/isoform in each plant tissue. This is Peroxidase 62 (PER62) from Arabidopsis thaliana (Mouse-ear cress).